The primary structure comprises 92 residues: Acylphosphatase (92 aa).

The region spanning 5–92 (RAHVVVSGKV…GEFSGFKIAF (88 aa)) is the Acylphosphatase-like domain. Residues Arg-20 and Asn-38 contribute to the active site.

Belongs to the acylphosphatase family.

The enzyme catalyses an acyl phosphate + H2O = a carboxylate + phosphate + H(+). The polypeptide is Acylphosphatase (acyP) (Pelotomaculum thermopropionicum (strain DSM 13744 / JCM 10971 / SI)).